We begin with the raw amino-acid sequence, 527 residues long: L-amino-acid oxidase (527 aa).

The N-terminal stretch at Met-1–Ala-27 is a signal peptide. Cysteines 37 and 200 form a disulfide. Residue Asn-58 is glycosylated (N-linked (GlcNAc...) asparagine). Residues Val-70–Ala-71, Glu-90–Ala-91, Arg-98, Gly-114–Arg-117, and Val-288 each bind FAD. Substrate is bound at residue Arg-117. Asn-393 carries an N-linked (GlcNAc...) asparagine glycan. Tyr-403 serves as a coordination point for substrate. FAD-binding positions include Glu-485 and Ala-492–Ala-497. A substrate-binding site is contributed by Ala-492–Trp-493.

Homodimer. Requires FAD as cofactor. As to expression, expression mainly observed in plasma, spleen, kidney and gills with low levels detected in blood and no expression detected in brain, liver, heart, muscle or intestine (at protein level).

It is found in the secreted. It carries out the reaction an L-alpha-amino acid + O2 + H2O = a 2-oxocarboxylate + H2O2 + NH4(+). Functionally, inhibits the growth of both Gram-negative and Gram-positive bacteria. Displays strong antibacterial activity towards V.cholerae and E.tarda. Causes deformation of the surface of S.aureus and the formation of pores on the surface of E.coli. Strong antiparasitic activity is seen towards C.irritans, T.brucei and I.multifiliis. Cilia of treated theronts are lost and the macronucleus swells, inducing cell membrane rupture and efflux of the cytoplasm. This chain is L-amino-acid oxidase, found in Siganus canaliculatus (White-spotted spinefoot).